The chain runs to 154 residues: 2S sulfur-rich seed storage protein 2 (154 aa).

The N-terminal stretch at Met1–Ala22 is a signal peptide. The segment at Thr29–Glu52 is disordered. Over residues Glu37–Glu52 the composition is skewed to basic and acidic residues. 4 disulfides stabilise this stretch: Cys47-Cys101, Cys60-Cys90, Cys91-Cys138, and Cys103-Cys145. The propeptide occupies Pro72–Pro76. Residues Thr151–Leu154 constitute a propeptide that is removed on maturation.

Belongs to the 2S seed storage albumins family. In terms of assembly, the mature protein consists of a small and a large chain linked by disulfide bonds.

Its function is as follows. This is a 2S seed storage protein. The polypeptide is 2S sulfur-rich seed storage protein 2 (BE2S2) (Bertholletia excelsa (Brazil nut)).